The primary structure comprises 210 residues: Ribosomal RNA large subunit methyltransferase E (210 aa).

S-adenosyl-L-methionine contacts are provided by Gly-61, Trp-63, Asp-81, Asp-97, and Asp-122. Catalysis depends on Lys-162, which acts as the Proton acceptor.

Belongs to the class I-like SAM-binding methyltransferase superfamily. RNA methyltransferase RlmE family.

Its subcellular location is the cytoplasm. The enzyme catalyses uridine(2552) in 23S rRNA + S-adenosyl-L-methionine = 2'-O-methyluridine(2552) in 23S rRNA + S-adenosyl-L-homocysteine + H(+). Its function is as follows. Specifically methylates the uridine in position 2552 of 23S rRNA at the 2'-O position of the ribose in the fully assembled 50S ribosomal subunit. In Xanthomonas axonopodis pv. citri (strain 306), this protein is Ribosomal RNA large subunit methyltransferase E.